Here is a 108-residue protein sequence, read N- to C-terminus: Competence protein ComGC (108 aa).

An N-terminal signal peptide occupies residues Met-1–Val-13. Residues Lys-14–Leu-39 form a may be involved in polymerization of ComGC region. Phe-16 is modified (N-methylphenylalanine). The chain crosses the membrane as a helical span at residues Phe-16 to Val-36.

It belongs to the ComGC family. In terms of assembly, the transformation pili are flexible filaments, consisting mainly of the major pilin ComGC and smaller amounts of the minor pilins, including at least ComGD, ComGF and ComGG, and perhaps ComGE. Homodimer. Forms higher-order multimers. Interacts with ComGG; the interaction is probably direct. Post-translationally, undergoes proteolytic cleavage.

Its subcellular location is the cell membrane. It is found in the cell surface. It localises to the fimbrium. The protein localises to the secreted. In terms of biological role, major component of the type IV-like pilus (T4P) that plays a role in transformation. Transformation pili are dynamically extended and retracted, perhaps thereby promoting DNA uptake and transformation. Required for transformation. Required for DNA binding. This chain is Competence protein ComGC, found in Streptococcus pneumoniae serotype 4 (strain ATCC BAA-334 / TIGR4).